The primary structure comprises 315 residues: MYQPSRGAARRLGPCLRAYQARPQDQLYPGTLPFPPLWPHSTTTTSPSSPLFWSPLPPRLPTQRLPQVPPLPLPQIQALSSAWVVLPPGKGEEGPGPELHSGCLDGLRSLFEGPPCPYPGAWIPFQVPGTAHPSPATPSGDPSMEEHLSVMYERLRQELPKLFLQSHDYSLYSLDVEFINEILNIRTKGRTWYILSLTLCRFLAWNYFAHLRLEVLQLTRHPENWTLQARWRLVGLPVHLLFLRFYKRDKDEHYRTYDAYSTFYLNSSGLICRHRLDKLMPSHSPPTPVKKLLVGALVALGLSEPEPDLNLCSKP.

This is an uncharacterized protein from Homo sapiens (Human).